The following is a 281-amino-acid chain: uncharacterized protein (281 aa).

This is an uncharacterized protein from Methanocaldococcus jannaschii (strain ATCC 43067 / DSM 2661 / JAL-1 / JCM 10045 / NBRC 100440) (Methanococcus jannaschii).